A 502-amino-acid chain; its full sequence is Tyrosine-protein kinase receptor old-1 (502 aa).

Positions 1 to 19 (MKGTLIFVVFYSSYGFAHC) are cleaved as a signal peptide. Residues 20–58 (NTILRSSSLSRNFEDSLRRIPRSTDKDETGFEDSNVQEV) lie on the Extracellular side of the membrane. Residues 59-79 (IFILLYCLFVALAILICGLII) traverse the membrane as a helical segment. Residues 80–502 (FYNSRKRELR…WLSDEKHCDS (423 aa)) lie on the Cytoplasmic side of the membrane. The interval 99-140 (LLEPTSADHKRRNSSNIVPPEPTPYPITSGESDLRQTPSRLS) is disordered. Polar residues predominate over residues 127–140 (SGESDLRQTPSRLS). The 299-residue stretch at 175 to 473 (ISKGRPLGSG…ELKTTSNEYF (299 aa)) folds into the Protein kinase domain. Residues 181-189 (LGSGEFGII) and Lys-213 contribute to the ATP site. Catalysis depends on Asp-321, which acts as the Proton acceptor.

The protein belongs to the protein kinase superfamily. Tyr protein kinase family.

It is found in the cell membrane. It catalyses the reaction L-tyrosyl-[protein] + ATP = O-phospho-L-tyrosyl-[protein] + ADP + H(+). Its function is as follows. Receptor tyrosine kinase which plays a role in promoting longevity and resistance to stresses including UV irradiation and high temperatures, probably downstream of daf-16. The chain is Tyrosine-protein kinase receptor old-1 from Caenorhabditis elegans.